We begin with the raw amino-acid sequence, 224 residues long: Large ribosomal subunit protein uL4 (224 aa).

Residues 54–73 (NRSEVSHSTKKPFRQKGTGN) form a disordered region.

The protein belongs to the universal ribosomal protein uL4 family. As to quaternary structure, part of the 50S ribosomal subunit.

One of the primary rRNA binding proteins, this protein initially binds near the 5'-end of the 23S rRNA. It is important during the early stages of 50S assembly. It makes multiple contacts with different domains of the 23S rRNA in the assembled 50S subunit and ribosome. Functionally, forms part of the polypeptide exit tunnel. This is Large ribosomal subunit protein uL4 from Chlamydia felis (strain Fe/C-56) (Chlamydophila felis).